Reading from the N-terminus, the 462-residue chain is Lipase A (462 aa).

An N-terminal signal peptide occupies residues 1 to 21; that stretch reads MRVSLRSITSLLAAATAAVLA. An intrachain disulfide couples C122 to C294. Residues S205, D355, and H387 each act as charge relay system in the active site. C371 and C415 are joined by a disulfide.

This sequence belongs to the AB hydrolase superfamily. Lipase family. In terms of assembly, monomer.

It localises to the secreted. It carries out the reaction a triacylglycerol + H2O = a diacylglycerol + a fatty acid + H(+). In terms of biological role, hydrolyzes triglycerides, with a preference for substrates with short-chain lengths (C4 to C8). Has the highest activity with tributyrin (C4), followed by tricaproin (C6) and tricaprylin (C8). Can also hydrolyze vinylacetate (C2) and triolein (C18), but with lower efficiency. Has no activity with tripalmitin (C16). In Moesziomyces aphidis (Pseudozyma aphidis), this protein is Lipase A.